The primary structure comprises 385 residues: Odorant receptor 47a (385 aa).

The Cytoplasmic portion of the chain corresponds to 1-33 (MDSFLQVQKSTIALLGFDLFSENREMWKRPYRA). Residues 34–54 (MNVFSIAAIFPFILAAVLHNW) traverse the membrane as a helical segment. The Extracellular portion of the chain corresponds to 55–62 (KNVLLLAD). A helical transmembrane segment spans residues 63–83 (AMVALLITILGLFKFSMILYL). Topologically, residues 84-129 (RRDFKRLIDKFRLLMSNEAEQGEEYAEILNAANKQDQRMCTLFRTC) are cytoplasmic. Residues 130–150 (FLLAWALNSVLPLVRMGLSYW) form a helical membrane-spanning segment. Residues 151–175 (LAGHAEPELPFPCLFPWNIHIIRNY) are Extracellular-facing. A helical transmembrane segment spans residues 176 to 196 (VLSFIWSAFASTGVVLPAVSL). Topologically, residues 197 to 255 (DTIFCSFTSNLCAFFKIAQYKVVRFKGGSLKESQATLNKVFALYQTSLDMCNDLNQCYQ) are cytoplasmic. Residues 256–276 (PIICAQFFISSLQLCMLGYLF) form a helical membrane-spanning segment. The Extracellular portion of the chain corresponds to 277 to 284 (SITFAQTE). Residues 285–305 (GVYYASFIATIIIQAYIYCYC) traverse the membrane as a helical segment. Topologically, residues 306–357 (GENLKTESASFEWAIYDSPWHESLGAGGASTSICRSLLISMMRAHRGFRITG) are cytoplasmic. The helical transmembrane segment at 358–378 (YFFEANMEAFSSIVRTAMSYI) threads the bilayer. Residues 379-385 (TMLRSFS) are Extracellular-facing.

It belongs to the insect chemoreceptor superfamily. Heteromeric odorant receptor channel (TC 1.A.69) family. Or1a subfamily. Interacts with Orco. Complexes exist early in the endomembrane system in olfactory sensory neurons (OSNs), coupling these complexes to the conserved ciliary trafficking pathway. As to expression, expressed with Orco in 40 olfactory receptor neurons in a broad area across the antenna, including both anterior and posterior faces. This expression pattern matches the distribution of the small sensilla basiconica. Expression in the antenna is observed late in antennal development at 93 hours APF.

The protein localises to the cell membrane. In terms of biological role, odorant receptor which mediates acceptance or avoidance behavior, depending on its substrates. The odorant receptor repertoire encodes a large collection of odor stimuli that vary widely in identity, intensity, and duration. Complexes with Orco to form odorant-sensing units, providing sensitive and prolonged odorant signaling and calcium permeability. They are necessary and sufficient to promote functional reconstitution of odor-evoked signaling in sensory neurons that normally respond only to carbon dioxide. Involved in the behavioral responses to esters. Involved in the behavioral responses to pentyl acetate. The sequence is that of Odorant receptor 47a (Or47a) from Drosophila melanogaster (Fruit fly).